The primary structure comprises 240 residues: Enolase-phosphatase E1 (240 aa).

2 residues coordinate Mg(2+): Asp-9 and Glu-11. Substrate contacts are provided by residues 129–130 (SS) and Lys-168. Residue Asp-195 participates in Mg(2+) binding.

The protein belongs to the HAD-like hydrolase superfamily. MasA/MtnC family. Monomer. Mg(2+) is required as a cofactor.

It is found in the cytoplasm. The protein resides in the nucleus. The enzyme catalyses 5-methylsulfanyl-2,3-dioxopentyl phosphate + H2O = 1,2-dihydroxy-5-(methylsulfanyl)pent-1-en-3-one + phosphate. It participates in amino-acid biosynthesis; L-methionine biosynthesis via salvage pathway; L-methionine from S-methyl-5-thio-alpha-D-ribose 1-phosphate: step 3/6. The protein operates within amino-acid biosynthesis; L-methionine biosynthesis via salvage pathway; L-methionine from S-methyl-5-thio-alpha-D-ribose 1-phosphate: step 4/6. In terms of biological role, bifunctional enzyme that catalyzes the enolization of 2,3-diketo-5-methylthiopentyl-1-phosphate (DK-MTP-1-P) into the intermediate 2-hydroxy-3-keto-5-methylthiopentenyl-1-phosphate (HK-MTPenyl-1-P), which is then dephosphorylated to form the acireductone 1,2-dihydroxy-3-keto-5-methylthiopentene (DHK-MTPene). The sequence is that of Enolase-phosphatase E1 from Candida tropicalis (strain ATCC MYA-3404 / T1) (Yeast).